The primary structure comprises 191 residues: uncharacterized protein (191 aa).

An N-terminal signal peptide occupies residues 1–17 (MESIILSIAIFIGVLLG). A disordered region spans residues 82–148 (TFSGSRTSPD…DVGAGSGSSI (67 aa)). A helical transmembrane segment spans residues 168–188 (VAVLITAAILSAPVTAIALLE).

It is found in the membrane. This is an uncharacterized protein from Saccharomyces cerevisiae (strain ATCC 204508 / S288c) (Baker's yeast).